The primary structure comprises 617 residues: Dopamine beta-hydroxylase (617 aa).

Residues methionine 1–arginine 16 are Cytoplasmic-facing. The helical; Signal-anchor for type II membrane protein transmembrane segment at glutamate 17–leucine 37 threads the bilayer. At glutamine 38 to glycine 617 the chain is on the intragranular side. The region spanning glycine 57–leucine 173 is the DOMON domain. Asparagine 64 is a glycosylation site (N-linked (GlcNAc...) asparagine). Intrachain disulfides connect cysteine 154–cysteine 596, cysteine 232–cysteine 283, cysteine 269–cysteine 295, cysteine 390–cysteine 503, cysteine 394–cysteine 565, and cysteine 466–cysteine 488. An N-linked (GlcNAc...) (complex) asparagine glycan is attached at asparagine 184. Tyrosine 230 is an active-site residue. Cu(2+) is bound by residues histidine 262 and histidine 263. Histidine 333 contributes to the Cu(2+) binding site. Asparagine 344 carries N-linked (GlcNAc...) asparagine glycosylation. Histidine 412 is an active-site residue. Residues histidine 412, histidine 414, and methionine 487 each contribute to the Cu(2+) site. Asparagine 566 is a glycosylation site (N-linked (GlcNAc...) asparagine). The segment at glutamate 590 to glycine 617 is disordered.

The protein belongs to the copper type II ascorbate-dependent monooxygenase family. In terms of assembly, homotetramer; composed of two disulfide-linked dimers. Requires Cu(2+) as cofactor. N-glycosylated. In terms of processing, proteolytic cleavage after the membrane-anchor leads to the release of the soluble form.

It is found in the cytoplasmic vesicle. The protein localises to the secretory vesicle lumen. Its subcellular location is the secretory vesicle. The protein resides in the chromaffin granule lumen. It localises to the secreted. It is found in the secretory vesicle membrane. The protein localises to the chromaffin granule membrane. The enzyme catalyses dopamine + 2 L-ascorbate + O2 = (R)-noradrenaline + 2 monodehydro-L-ascorbate radical + H2O. The protein operates within catecholamine biosynthesis; (R)-noradrenaline biosynthesis; (R)-noradrenaline from dopamine: step 1/1. In terms of biological role, catalyzes the hydroxylation of dopamine to noradrenaline (also known as norepinephrine), and is thus vital for regulation of these neurotransmitters. The sequence is that of Dopamine beta-hydroxylase (DBH) from Homo sapiens (Human).